A 547-amino-acid chain; its full sequence is MPTPIHVLPPHVARLIAAGEVVSRPLDVVRELVENALDAGASRIEIEVDGGGLERVQVRDNGSGIAAQSVPLAPARHATSKLTAGPETGSLSVTTLGFRGEALWAAAQAGELELTTRPAAQVGAARLRAQGDAVEVSRTSAPAGTTVTVSQLFARLPARLRTQASAAAEVRDITALLGRYVLHHSALHWRLTVDGDPRLTHAPADHRGAVATVYGPLSANRVLTLDTPGVRGVVSRPELTRARRDRMHFAVNGRPIVAPPELERAVIDAYAELLPAGTAPLCVLDLTVAPEDYDPNIHPAKQVVALADLPAVALRVRDAVAGALAGHPLVRAAPALIAPPEPHPAPTAGNFPDLTLLGVYQELYLLAQGEGDLWVVDAHAAHERALYERLGRELGTAAPLELPTPELLHLTPEQTARLHERGAELRGWGLTIEDFGAGLARLRTLPAALAALPVPRLHEVVVETALSGGPDPRREVLARLACLPALKAGMLDAERGALVLAALRECEQPWACPHGRPTVLRLSERDLAHAFGRRGVRDVARGRDSVV.

This sequence belongs to the DNA mismatch repair MutL/HexB family.

In terms of biological role, this protein is involved in the repair of mismatches in DNA. It is required for dam-dependent methyl-directed DNA mismatch repair. May act as a 'molecular matchmaker', a protein that promotes the formation of a stable complex between two or more DNA-binding proteins in an ATP-dependent manner without itself being part of a final effector complex. In Deinococcus radiodurans (strain ATCC 13939 / DSM 20539 / JCM 16871 / CCUG 27074 / LMG 4051 / NBRC 15346 / NCIMB 9279 / VKM B-1422 / R1), this protein is DNA mismatch repair protein MutL.